Reading from the N-terminus, the 243-residue chain is DNA repair protein RecO (243 aa).

It belongs to the RecO family.

Its function is as follows. Involved in DNA repair and RecF pathway recombination. The chain is DNA repair protein RecO from Thermobifida fusca (strain YX).